We begin with the raw amino-acid sequence, 403 residues long: Serine/threonine transporter SstT (403 aa).

The next 9 membrane-spanning stretches (helical) occupy residues 14–34, 44–64, 79–99, 138–158, 175–195, 214–234, 295–315, 327–347, and 353–373; these read VTQI…APAI, VFVS…VMAS, ILWL…FASM, ALLN…GVAL, GVTL…FGLV, LAVL…LIVF, MAGA…TLGI, VVAA…LLLI, and LFGI…IIGV.

Belongs to the dicarboxylate/amino acid:cation symporter (DAACS) (TC 2.A.23) family.

It is found in the cell inner membrane. The enzyme catalyses L-serine(in) + Na(+)(in) = L-serine(out) + Na(+)(out). It catalyses the reaction L-threonine(in) + Na(+)(in) = L-threonine(out) + Na(+)(out). Functionally, involved in the import of serine and threonine into the cell, with the concomitant import of sodium (symport system). This Pseudomonas putida (strain ATCC 47054 / DSM 6125 / CFBP 8728 / NCIMB 11950 / KT2440) protein is Serine/threonine transporter SstT.